Consider the following 884-residue polypeptide: MFNFLFNSSNQRKINSYAPIVKKINALEIEMQDLPDKVLRAKSVQFKSRLQNGENLDDILVEAFAVVREAGLRVLGLRVFDVQMMGAIILHQGKIAEMKTGEGKTLVATLAGYLNALSGEGVHVVTVNDYLAKRDSEWVGQIHKFLGLSVGLIQQALPKVERKLAYQCDVTYVTNSELGFDYLKDNMVLSMSEIVQNKFAFCIIDEVDSILIDEARTPLIISGPSEAPIEKYSRTKLLANILSKDVHYEVDEKARNIILTEQGTLFCEEYLSINNLYDLENPWVQYILNAIKARELFTKDVHYIIRDKEVVIVDEFTGRIMSGRRWSDGLHQAIEAKEDVVIQQENQTYASITYQNFFLLYPKLSGMTGTAKTEESELDKIYNLEVICVPTHKPLRRKEFPDLVYSNEYRKWEAIADECYDMYRVGRPTLVGTTSVEKSELLSKLLNQYKIPHSLLNAKPENVEKESDIIAQAGRQSSVTIATNMAGRGTDIILGGNPSYIAKSILVDLLIGKSSVKNNYKLQQLSPNTKISLNNILNALETDLHSVDFSMLEMEKKISIACEQVLTDDKLEIQLRKAYQMIFEEFETIFSKEREYVSQAGGLHVIGTERHESRRIDNQLRGRAGRQGDPGSSRFFLSVDDNLLRIFGGNKIADLMQALNVDNDTPMESTLLSKSLEAAQKKVEAYFYDTRKQVFEYDQVLNSQRQAIYAERRRILESSYPRDCVLQYAESTIDDIITFWLTSKENPEKFVNLNIKIKYLLNAADTFSISKDLYKDSEELKKWIIEQVRINYDLREAYLEQIKPGLIRQLEKYYLLQQIDNAWKDHLQKMGALRDSIGWRSYGQQDPLVEYKNEAFNLFIEMITHVKHTVVYAILRSRLMMKND.

ATP-binding positions include Gln83, 101–105 (GEGKT), and Asp491.

The protein belongs to the SecA family.

The protein localises to the plastid. Its subcellular location is the chloroplast stroma. It localises to the chloroplast thylakoid membrane. It catalyses the reaction ATP + H2O + cellular proteinSide 1 = ADP + phosphate + cellular proteinSide 2.. Functionally, has a central role in coupling the hydrolysis of ATP to the transfer of proteins across the thylakoid membrane. In Pyropia yezoensis (Susabi-nori), this protein is Protein translocase subunit SecA.